Reading from the N-terminus, the 142-residue chain is MPNKALITGFWSKVKVDEVGAEALGRLLVVYPWTQRFFEHFGDLSSADAVLGNAKVKAHGKKVLDSFSNGVQHLDDLKGTFAELSELHCDKLHVDPENFRLLGNVLVIVLARHFGKEFTPELQAEFQKVVAGVASALAHRYH.

Residues Met1 to His142 form the Globin domain. Residues His59 and His88 each coordinate heme b.

This sequence belongs to the globin family. In terms of assembly, heterotetramer of two alpha chains and two beta chains. In terms of tissue distribution, red blood cells.

In terms of biological role, involved in oxygen transport from the lung to the various peripheral tissues. The protein is Hemoglobin subunit beta-C (HBBC) of Capra hircus (Goat).